The primary structure comprises 535 residues: Doublesex- and mab-3-related transcription factor A2 (535 aa).

Residues 69-116 (CARCRNHGVVSALKGHKRYCRWKDCLCAKCTLIAERQRVMAAQVALRR) constitute a DNA-binding region (DM). Residues 200 to 315 (LQAGRPGSPQ…GGPGPRQRTP (116 aa)) form a disordered region. The region spanning 313-348 (RTPLDILTRVFPGHRRGVLELVLQGCGGDVVQAIEQ) is the DMA domain.

This sequence belongs to the DMRT family.

It localises to the nucleus. In terms of biological role, may be involved in sexual development. The polypeptide is Doublesex- and mab-3-related transcription factor A2 (DMRTA2) (Bos taurus (Bovine)).